Here is a 1358-residue protein sequence, read N- to C-terminus: DNA-directed RNA polymerase subunit beta (1358 aa).

Belongs to the RNA polymerase beta chain family. As to quaternary structure, the RNAP catalytic core consists of 2 alpha, 1 beta, 1 beta' and 1 omega subunit. When a sigma factor is associated with the core the holoenzyme is formed, which can initiate transcription.

The catalysed reaction is RNA(n) + a ribonucleoside 5'-triphosphate = RNA(n+1) + diphosphate. DNA-dependent RNA polymerase catalyzes the transcription of DNA into RNA using the four ribonucleoside triphosphates as substrates. This chain is DNA-directed RNA polymerase subunit beta, found in Xanthobacter autotrophicus (strain ATCC BAA-1158 / Py2).